Here is a 165-residue protein sequence, read N- to C-terminus: uncharacterized protein (165 aa).

Residues 1–38 (MFTVKEKNRQELEEELNDLEFQIYRMQENMKDLSKDAK) adopt a coiled-coil conformation.

This is an uncharacterized protein from Bacillus subtilis (strain 168).